The chain runs to 185 residues: Probable chorismate pyruvate-lyase 1 (185 aa).

Residues Arg-68, Leu-106, and Glu-164 each coordinate substrate.

This sequence belongs to the UbiC family.

The protein localises to the cytoplasm. It carries out the reaction chorismate = 4-hydroxybenzoate + pyruvate. The protein operates within cofactor biosynthesis; ubiquinone biosynthesis. Its function is as follows. Removes the pyruvyl group from chorismate, with concomitant aromatization of the ring, to provide 4-hydroxybenzoate (4HB) for the ubiquinone pathway. This chain is Probable chorismate pyruvate-lyase 1, found in Pseudomonas entomophila (strain L48).